The sequence spans 223 residues: Cytidylate kinase (223 aa).

13–21 (GPSASGKGT) contributes to the ATP binding site.

This sequence belongs to the cytidylate kinase family. Type 1 subfamily.

It localises to the cytoplasm. The catalysed reaction is CMP + ATP = CDP + ADP. It catalyses the reaction dCMP + ATP = dCDP + ADP. The chain is Cytidylate kinase from Nitrosomonas europaea (strain ATCC 19718 / CIP 103999 / KCTC 2705 / NBRC 14298).